The sequence spans 472 residues: Bone morphogenetic protein 3 (472 aa).

The first 22 residues, 1-22, serve as a signal peptide directing secretion; that stretch reads MAGASRLLFLWLGCFCVSLAQG. Positions 23–362 are excised as a propeptide; the sequence is ERPKPPFPEL…EQTLKKARRK (340 aa). Residues 27 to 37 are compositionally biased toward basic and acidic residues; it reads PPFPELRKAVP. The segment at 27 to 53 is disordered; sequence PPFPELRKAVPGDRTAGGGPDSELQPQ. 4 N-linked (GlcNAc...) asparagine glycosylation sites follow: asparagine 117, asparagine 141, asparagine 175, and asparagine 220. Residues 320-350 form a disordered region; sequence PYKTLQAQAPEKSKNKKKQRKGPHRKSQTLQ. Basic residues predominate over residues 333–346; the sequence is KNKKKQRKGPHRKS. 3 cysteine pairs are disulfide-bonded: cysteine 370-cysteine 437, cysteine 399-cysteine 469, and cysteine 403-cysteine 471. Asparagine 463 is a glycosylation site (N-linked (GlcNAc...) asparagine).

The protein belongs to the TGF-beta family. As to quaternary structure, homodimer; disulfide-linked. Interacts with type II receptor ACVR2B. As to expression, expressed in adult and fetal cartilage.

It is found in the secreted. In terms of biological role, growth factor of the TGF-beta superfamily that plays an essential role in developmental process by inducing and patterning early skeletal formation and by negatively regulating bone density. Antagonizes the ability of certain osteogenic BMPs to induce osteoprogenitor differentiation and ossification. Initiates signaling cascades by associating with type II receptor ACVR2B to activate SMAD2-dependent and SMAD-independent signaling cascades including TAK1 and JNK pathways. This is Bone morphogenetic protein 3 (BMP3) from Homo sapiens (Human).